Reading from the N-terminus, the 495-residue chain is Glycerol kinase (495 aa).

Position 14 (Thr14) interacts with ADP. Thr14, Thr15, and Ser16 together coordinate ATP. Thr14 is a sn-glycerol 3-phosphate binding site. ADP is bound at residue Arg18. Sn-glycerol 3-phosphate contacts are provided by Arg84, Glu85, Tyr136, and Asp246. Residues Arg84, Glu85, Tyr136, Asp246, and Gln247 each contribute to the glycerol site. Residues Thr268 and Gly312 each contribute to the ADP site. 4 residues coordinate ATP: Thr268, Gly312, Gln316, and Gly413. ADP is bound by residues Gly413 and Asn417.

The protein belongs to the FGGY kinase family.

The enzyme catalyses glycerol + ATP = sn-glycerol 3-phosphate + ADP + H(+). It participates in polyol metabolism; glycerol degradation via glycerol kinase pathway; sn-glycerol 3-phosphate from glycerol: step 1/1. Its activity is regulated as follows. Inhibited by fructose 1,6-bisphosphate (FBP). Key enzyme in the regulation of glycerol uptake and metabolism. Catalyzes the phosphorylation of glycerol to yield sn-glycerol 3-phosphate. This Bdellovibrio bacteriovorus (strain ATCC 15356 / DSM 50701 / NCIMB 9529 / HD100) protein is Glycerol kinase.